The primary structure comprises 339 residues: Heat-inducible transcription repressor HrcA (339 aa).

It belongs to the HrcA family.

Negative regulator of class I heat shock genes (grpE-dnaK-dnaJ and groELS operons). Prevents heat-shock induction of these operons. The polypeptide is Heat-inducible transcription repressor HrcA (Methylobacillus flagellatus (strain ATCC 51484 / DSM 6875 / VKM B-1610 / KT)).